Reading from the N-terminus, the 449-residue chain is Methylenetetrahydrofolate--tRNA-(uracil-5-)-methyltransferase TrmFO (449 aa).

9–14 (GGGIAG) is an FAD binding site.

This sequence belongs to the MnmG family. TrmFO subfamily. Requires FAD as cofactor.

It is found in the cytoplasm. The catalysed reaction is uridine(54) in tRNA + (6R)-5,10-methylene-5,6,7,8-tetrahydrofolate + NADH + H(+) = 5-methyluridine(54) in tRNA + (6S)-5,6,7,8-tetrahydrofolate + NAD(+). It catalyses the reaction uridine(54) in tRNA + (6R)-5,10-methylene-5,6,7,8-tetrahydrofolate + NADPH + H(+) = 5-methyluridine(54) in tRNA + (6S)-5,6,7,8-tetrahydrofolate + NADP(+). Catalyzes the folate-dependent formation of 5-methyl-uridine at position 54 (M-5-U54) in all tRNAs. The protein is Methylenetetrahydrofolate--tRNA-(uracil-5-)-methyltransferase TrmFO of Gloeobacter violaceus (strain ATCC 29082 / PCC 7421).